Here is a 79-residue protein sequence, read N- to C-terminus: D-alanyl carrier protein (79 aa).

A Carrier domain is found at 1 to 77; sequence MDTKQGVLDI…KIVAKVESLE (77 aa). The residue at position 35 (S35) is an O-(pantetheine 4'-phosphoryl)serine.

This sequence belongs to the DltC family. 4'-phosphopantetheine is transferred from CoA to a specific serine of apo-DCP.

The protein localises to the cytoplasm. It functions in the pathway cell wall biogenesis; lipoteichoic acid biosynthesis. In terms of biological role, carrier protein involved in the D-alanylation of lipoteichoic acid (LTA). The loading of thioester-linked D-alanine onto DltC is catalyzed by D-alanine--D-alanyl carrier protein ligase DltA. The DltC-carried D-alanyl group is further transferred to cell membrane phosphatidylglycerol (PG) by forming an ester bond, probably catalyzed by DltD. D-alanylation of LTA plays an important role in modulating the properties of the cell wall in Gram-positive bacteria, influencing the net charge of the cell wall. This chain is D-alanyl carrier protein, found in Lactobacillus acidophilus (strain ATCC 700396 / NCK56 / N2 / NCFM).